We begin with the raw amino-acid sequence, 282 residues long: High mobility group nucleosome-binding domain-containing protein 5 (282 aa).

The interval 1–282 (MPKRKAAGQG…GKKEEPQSIV (282 aa)) is disordered. Residue Thr31 is modified to Phosphothreonine. A compositionally biased stretch (basic residues) spans 37–46 (KRTSSSRKMK). Lys67 participates in a covalent cross-link: Glycyl lysine isopeptide (Lys-Gly) (interchain with G-Cter in SUMO2). At Tyr76 the chain carries Phosphotyrosine. Over residues 81-119 (KNGEAKITEAPASEKEIVEVKEENIEDATEKGGEKKEAV) the composition is skewed to basic and acidic residues. Ser93 is modified (phosphoserine). A Glycyl lysine isopeptide (Lys-Gly) (interchain with G-Cter in SUMO1); alternate cross-link involves residue Lys101. Residue Lys101 forms a Glycyl lysine isopeptide (Lys-Gly) (interchain with G-Cter in SUMO2); alternate linkage. Lys124 participates in a covalent cross-link: Glycyl lysine isopeptide (Lys-Gly) (interchain with G-Cter in SUMO2). Acidic residues predominate over residues 125 to 138 (NEEEDQKEDEEDQN). Composition is skewed to basic and acidic residues over residues 139–152 (EEKGEAGKEDKDEK) and 158–256 (KEDK…KEDL). Acidic residues predominate over residues 257-270 (KEEEEGKEEDEIKE). Positions 271-282 (DDGKKEEPQSIV) are enriched in basic and acidic residues.

The protein belongs to the HMGN family. Ubiquitously expressed.

The protein localises to the nucleus. Its function is as follows. Preferentially binds to euchromatin and modulates cellular transcription by counteracting linker histone-mediated chromatin compaction. The sequence is that of High mobility group nucleosome-binding domain-containing protein 5 (HMGN5) from Homo sapiens (Human).